Reading from the N-terminus, the 71-residue chain is Exodeoxyribonuclease 7 small subunit (71 aa).

This sequence belongs to the XseB family. Heterooligomer composed of large and small subunits.

The protein resides in the cytoplasm. It carries out the reaction Exonucleolytic cleavage in either 5'- to 3'- or 3'- to 5'-direction to yield nucleoside 5'-phosphates.. Its function is as follows. Bidirectionally degrades single-stranded DNA into large acid-insoluble oligonucleotides, which are then degraded further into small acid-soluble oligonucleotides. The sequence is that of Exodeoxyribonuclease 7 small subunit from Streptococcus uberis (strain ATCC BAA-854 / 0140J).